The chain runs to 95 residues: Acylphosphatase (95 aa).

The Acylphosphatase-like domain occupies 7 to 95; sequence RLTAWVLGTV…PKGEVGFRTR (89 aa). Catalysis depends on residues R22 and N40.

It belongs to the acylphosphatase family.

The catalysed reaction is an acyl phosphate + H2O = a carboxylate + phosphate + H(+). In Corynebacterium diphtheriae (strain ATCC 700971 / NCTC 13129 / Biotype gravis), this protein is Acylphosphatase (acyP).